We begin with the raw amino-acid sequence, 387 residues long: Succinate--CoA ligase [ADP-forming] subunit beta (387 aa).

In terms of domain architecture, ATP-grasp spans 9-245; that stretch reads KDLLESYGLK…KSQENAKELK (237 aa). Residues lysine 46, 53–55, glutamate 100, tyrosine 103, and glutamate 108 contribute to the ATP site; that span reads GRG. Mg(2+)-binding residues include asparagine 200 and aspartate 214. Residues asparagine 265 and 322-324 each bind substrate; that span reads GIV.

The protein belongs to the succinate/malate CoA ligase beta subunit family. As to quaternary structure, heterotetramer of two alpha and two beta subunits. The cofactor is Mg(2+).

The enzyme catalyses succinate + ATP + CoA = succinyl-CoA + ADP + phosphate. The catalysed reaction is GTP + succinate + CoA = succinyl-CoA + GDP + phosphate. It functions in the pathway carbohydrate metabolism; tricarboxylic acid cycle; succinate from succinyl-CoA (ligase route): step 1/1. Succinyl-CoA synthetase functions in the citric acid cycle (TCA), coupling the hydrolysis of succinyl-CoA to the synthesis of either ATP or GTP and thus represents the only step of substrate-level phosphorylation in the TCA. The beta subunit provides nucleotide specificity of the enzyme and binds the substrate succinate, while the binding sites for coenzyme A and phosphate are found in the alpha subunit. This is Succinate--CoA ligase [ADP-forming] subunit beta from Francisella tularensis subsp. tularensis (strain WY96-3418).